We begin with the raw amino-acid sequence, 435 residues long: MQTNVENLGALERRLNVSVPQEKIETEVESRLKRLARTAKFHGFRPGKVPLKIVAQQYGPQVRQEVMEDVLKKNFSEAVRENNLRVAGYPRFEPKLAESDTAQVEFSATFEVYPDITLGDLGGAHIERPVVEVTPADVDKTLEVLRKQRVEFEPVDRPAQAGDRINIDYRGLIDGAEFAGGKAENFSLVLGEGRLLKDFEEPLLGMSPGQSKTFEVAFPSDYHGKEVAGKTAVFEVKLSGVESSKLPEVNADFATSLGIAEGDVEKMRSEIRANLEREAAKRVNARLKEQVMQVLIDTTSNIDPPKALVEMELDRLMEDARNDFASRGLDTKNFSLPHDMLQERAQHRVKLGLILGELVKMHNLHPKPEQVRAVVEDLAQAYENPAEVVSWHYAAPERLREAESAALEDNVVTWVLEKAVVTGKPMPLDELMGRS.

The 86-residue stretch at glycine 162–proline 247 folds into the PPIase FKBP-type domain.

This sequence belongs to the FKBP-type PPIase family. Tig subfamily.

Its subcellular location is the cytoplasm. The catalysed reaction is [protein]-peptidylproline (omega=180) = [protein]-peptidylproline (omega=0). Its function is as follows. Involved in protein export. Acts as a chaperone by maintaining the newly synthesized protein in an open conformation. Functions as a peptidyl-prolyl cis-trans isomerase. The polypeptide is Trigger factor (Nitrosospira multiformis (strain ATCC 25196 / NCIMB 11849 / C 71)).